We begin with the raw amino-acid sequence, 267 residues long: Probable proteasome subunit beta type-2 (267 aa).

Positions 1–35 (MMGINERKGFDFEYYQRNLLLQEKGFPTPKATSTG) are cleaved as a propeptide — removed in mature form. Thr36 acts as the Nucleophile in catalysis.

Belongs to the peptidase T1B family. In terms of assembly, the 26S proteasome consists of a 20S proteasome core and two 19S regulatory subunits. The 20S proteasome core is composed of 28 subunits that are arranged in four stacked rings, resulting in a barrel-shaped structure. The two end rings are each formed by seven alpha subunits, and the two central rings are each formed by seven beta subunits. The catalytic chamber with the active sites is on the inside of the barrel.

Its subcellular location is the cytoplasm. The protein resides in the nucleus. It catalyses the reaction Cleavage of peptide bonds with very broad specificity.. Its function is as follows. The proteasome is a multicatalytic proteinase complex which is characterized by its ability to cleave peptides with Arg, Phe, Tyr, Leu, and Glu adjacent to the leaving group at neutral or slightly basic pH. The proteasome has an ATP-dependent proteolytic activity (Potential). The chain is Probable proteasome subunit beta type-2 (pup1) from Schizosaccharomyces pombe (strain 972 / ATCC 24843) (Fission yeast).